A 254-amino-acid chain; its full sequence is UPF0246 protein Fphi_1075 (254 aa).

It belongs to the UPF0246 family.

The sequence is that of UPF0246 protein Fphi_1075 from Francisella philomiragia subsp. philomiragia (strain ATCC 25017 / CCUG 19701 / FSC 153 / O#319-036).